A 207-amino-acid polypeptide reads, in one-letter code: Flavin-dependent thymidylate synthase (207 aa).

The region spanning 1 to 204 (MQITLLFHTP…KFIFEHCLHK (204 aa)) is the ThyX domain. FAD contacts are provided by residues Ser-50 and 74–76 (RHR). Residues 71–74 (EVAR), 84–86 (STR), and Lys-143 each bind dUMP. The ThyX motif signature appears at 74-84 (RHRHTSPSVKS). Residues 159–161 (NAR) and Asn-165 each bind FAD. Position 170 (Arg-170) interacts with dUMP. Catalysis depends on Arg-170, which acts as the Involved in ionization of N3 of dUMP, leading to its activation.

The protein belongs to the thymidylate synthase ThyX family. Homotetramer. Requires FAD as cofactor.

The catalysed reaction is dUMP + (6R)-5,10-methylene-5,6,7,8-tetrahydrofolate + NADPH + H(+) = dTMP + (6S)-5,6,7,8-tetrahydrofolate + NADP(+). The protein operates within pyrimidine metabolism; dTTP biosynthesis. In terms of biological role, catalyzes the reductive methylation of 2'-deoxyuridine-5'-monophosphate (dUMP) to 2'-deoxythymidine-5'-monophosphate (dTMP) while utilizing 5,10-methylenetetrahydrofolate (mTHF) as the methyl donor, and NADPH and FADH(2) as the reductant. The polypeptide is Flavin-dependent thymidylate synthase (Campylobacter jejuni subsp. jejuni serotype O:2 (strain ATCC 700819 / NCTC 11168)).